A 347-amino-acid chain; its full sequence is Dihydroorotase (347 aa).

Residues His13 and His15 each contribute to the Zn(2+) site. Substrate-binding positions include 15 to 17 (HLR) and Asn41. Positions 99, 136, and 174 each coordinate Zn(2+). Residue Lys99 is modified to N6-carboxylysine. His136 provides a ligand contact to substrate. Residue Leu219 coordinates substrate. Asp247 contacts Zn(2+). Asp247 is a catalytic residue. The substrate site is built by His251 and Ala263.

Belongs to the metallo-dependent hydrolases superfamily. DHOase family. Class II DHOase subfamily. In terms of assembly, homodimer. The cofactor is Zn(2+).

The catalysed reaction is (S)-dihydroorotate + H2O = N-carbamoyl-L-aspartate + H(+). It functions in the pathway pyrimidine metabolism; UMP biosynthesis via de novo pathway; (S)-dihydroorotate from bicarbonate: step 3/3. In terms of biological role, catalyzes the reversible cyclization of carbamoyl aspartate to dihydroorotate. The protein is Dihydroorotase of Rhizobium meliloti (strain 1021) (Ensifer meliloti).